Consider the following 130-residue polypeptide: D-ribose pyranase (130 aa).

Catalysis depends on histidine 20, which acts as the Proton donor. Substrate contacts are provided by residues aspartate 28, histidine 97, and 119–121 (YAN).

The protein belongs to the RbsD / FucU family. RbsD subfamily. As to quaternary structure, homodecamer.

The protein localises to the cytoplasm. The enzyme catalyses beta-D-ribopyranose = beta-D-ribofuranose. It participates in carbohydrate metabolism; D-ribose degradation; D-ribose 5-phosphate from beta-D-ribopyranose: step 1/2. Catalyzes the interconversion of beta-pyran and beta-furan forms of D-ribose. This is D-ribose pyranase from Thermoanaerobacter pseudethanolicus (strain ATCC 33223 / 39E) (Clostridium thermohydrosulfuricum).